Reading from the N-terminus, the 218-residue chain is Eukaryotic translation initiation factor 3 subunit K (218 aa).

Residues 44–205 form the PCI domain; the sequence is YDWGANLAVL…NIKTKNITEK (162 aa).

It belongs to the eIF-3 subunit K family. As to quaternary structure, component of the eukaryotic translation initiation factor 3 (eIF-3) complex.

It localises to the cytoplasm. In terms of biological role, component of the eukaryotic translation initiation factor 3 (eIF-3) complex, which is involved in protein synthesis of a specialized repertoire of mRNAs and, together with other initiation factors, stimulates binding of mRNA and methionyl-tRNAi to the 40S ribosome. The eIF-3 complex specifically targets and initiates translation of a subset of mRNAs involved in cell proliferation. The protein is Eukaryotic translation initiation factor 3 subunit K of Bombyx mori (Silk moth).